The primary structure comprises 368 residues: Galanin receptor type 3 (368 aa).

Residues 1-20 (MADAQNISLDSPGSVGAVAV) are Extracellular-facing. N-linked (GlcNAc...) asparagine glycosylation is present at Asn-6. Residues 21–41 (PVVFALIFLLGTVGNGLVLAV) form a helical membrane-spanning segment. Over 42–57 (LLQPGPSAWQEPGSTT) the chain is Cytoplasmic. The chain crosses the membrane as a helical span at residues 58-78 (DLFILNLAVADLCFILCCVPF). Over 79 to 96 (QATIYTLDAWLFGALVCK) the chain is Extracellular. Cysteines 95 and 172 form a disulfide. Residues 97–118 (AVHLLIYLTMYASSFTLAAVSV) traverse the membrane as a helical segment. Topologically, residues 119 to 138 (DRYLAVRHPLRSRALRTPRN) are cytoplasmic. The chain crosses the membrane as a helical span at residues 139–159 (ARAAVGLVWLLAALFSAPYLS). Residues 160–184 (YYGTVRYGALELCVPAWEDARRRAL) lie on the Extracellular side of the membrane. The chain crosses the membrane as a helical span at residues 185 to 205 (DVATFAAGYLLPVAVVSLAYG). Over 206–236 (RTLRFLWAAVGPAGAAAAEARRRATGRAGRA) the chain is Cytoplasmic. Residues 237-257 (MLAVAALYALCWGPHHALILC) traverse the membrane as a helical segment. Over 258–259 (FW) the chain is Extracellular. A helical transmembrane segment spans residues 260-280 (YGRFAFSPATYACRLASHCLA). Topologically, residues 281–368 (YANSCLNPLV…HGGEAARGPE (88 aa)) are cytoplasmic. A lipid anchor (S-palmitoyl cysteine) is attached at Cys-308. The interval 317-368 (RRALRRVRPASSGPPGCPGDARPSGRLLAGGGQGPEPREGPVHGGEAARGPE) is disordered.

Belongs to the G-protein coupled receptor 1 family.

The protein resides in the cell membrane. Its function is as follows. Receptor for the hormone galanin. Receptor for the hormone spexin-1. In Homo sapiens (Human), this protein is Galanin receptor type 3 (GALR3).